Consider the following 418-residue polypeptide: MKFAIESISKNSGRLGQLRIKDGGPEFKTPLLLQTTKGGSIPWLSADVFETQVSRKPQVLQFTLSTMEQMTEALTHWNSGGGRGLSDYVGLPGHLNILLLRDPCETTPSGGNDRDILPLFTRRGKESLSAERYMEIVASFKPDMYEGLCDADTNLESAKKRVQKSVDRTEKFMHYIYEHRGKVNSTLLAPIVGGYNTFARTQSIKHAREQPAGSYGGYIFEGFHTNGLSATTLDTSELLPIVEHCVKQLEEDKPRILPGAYTPLTILELIQQGIDVFDTSYAYCASLNFKALTFSFVQDAVEHVPFLDITDEAIKEDFNPPLSNCNCLTCQKHTRAYLHHLYKTNELLGPILLMVHNLYHYMDFFEKIRESVAKDTLPQLTELVRNQNGKTQVDYSIAANTKVISKATMEKGFAAAAV.

The Zn(2+) site is built by cysteine 325, cysteine 327, cysteine 330, and histidine 356.

This sequence belongs to the queuine tRNA-ribosyltransferase family. QTRT2 subfamily. In terms of assembly, heterodimer of a catalytic subunit and an accessory subunit. The cofactor is Zn(2+).

It localises to the cytoplasm. Functionally, non-catalytic subunit of the queuine tRNA-ribosyltransferase (TGT) that catalyzes the base-exchange of a guanine (G) residue with queuine (Q) at position 34 (anticodon wobble position) in tRNAs with GU(N) anticodons (tRNA-Asp, -Asn, -His and -Tyr), resulting in the hypermodified nucleoside queuosine (7-(((4,5-cis-dihydroxy-2-cyclopenten-1-yl)amino)methyl)-7-deazaguanosine). The polypeptide is Queuine tRNA-ribosyltransferase accessory subunit 2 (Drosophila sechellia (Fruit fly)).